A 300-amino-acid polypeptide reads, in one-letter code: NAD kinase (300 aa).

The Proton acceptor role is filled by aspartate 78. NAD(+)-binding positions include aspartate 78–glycine 79, asparagine 152–aspartate 153, histidine 163, arginine 180, aspartate 182, and threonine 193–serine 198.

Belongs to the NAD kinase family. A divalent metal cation is required as a cofactor.

The protein localises to the cytoplasm. The enzyme catalyses NAD(+) + ATP = ADP + NADP(+) + H(+). Functionally, involved in the regulation of the intracellular balance of NAD and NADP, and is a key enzyme in the biosynthesis of NADP. Catalyzes specifically the phosphorylation on 2'-hydroxyl of the adenosine moiety of NAD to yield NADP. This chain is NAD kinase, found in Alcanivorax borkumensis (strain ATCC 700651 / DSM 11573 / NCIMB 13689 / SK2).